We begin with the raw amino-acid sequence, 182 residues long: Large ribosomal subunit protein uL6 (182 aa).

It belongs to the universal ribosomal protein uL6 family. Part of the 50S ribosomal subunit.

This protein binds to the 23S rRNA, and is important in its secondary structure. It is located near the subunit interface in the base of the L7/L12 stalk, and near the tRNA binding site of the peptidyltransferase center. The protein is Large ribosomal subunit protein uL6 of Desulforamulus reducens (strain ATCC BAA-1160 / DSM 100696 / MI-1) (Desulfotomaculum reducens).